The sequence spans 119 residues: Putative ankyrin repeat domain-containing protein 26-like 1 (119 aa).

The stretch at 15–112 (EKEEDLLHKN…EKQSRQRLTK (98 aa)) forms a coiled coil.

The protein is Putative ankyrin repeat domain-containing protein 26-like 1 (ANKRD36BP1) of Homo sapiens (Human).